A 94-amino-acid chain; its full sequence is Putative pterin-4-alpha-carbinolamine dehydratase (94 aa).

It belongs to the pterin-4-alpha-carbinolamine dehydratase family.

The enzyme catalyses (4aS,6R)-4a-hydroxy-L-erythro-5,6,7,8-tetrahydrobiopterin = (6R)-L-erythro-6,7-dihydrobiopterin + H2O. The protein is Putative pterin-4-alpha-carbinolamine dehydratase of Mycobacteroides abscessus (strain ATCC 19977 / DSM 44196 / CCUG 20993 / CIP 104536 / JCM 13569 / NCTC 13031 / TMC 1543 / L948) (Mycobacterium abscessus).